The sequence spans 513 residues: Activin receptor type-2A (513 aa).

A signal peptide spans 1–19 (MGAAAKLAFAVFLISCSSG). Residues 20–135 (AILGRSETQE…TSNPVTPKPP (116 aa)) are Extracellular-facing. Intrachain disulfides connect Cys-30/Cys-60, Cys-50/Cys-78, Cys-85/Cys-104, Cys-91/Cys-103, and Cys-105/Cys-110. 2 N-linked (GlcNAc...) asparagine glycosylation sites follow: Asn-43 and Asn-66. Residues 136–161 (YYNILLYSLVPLMLIAGIVICAFWVY) traverse the membrane as a helical segment. The Cytoplasmic segment spans residues 162 to 513 (RHHKMAYPPV…VDFPPKESSL (352 aa)). The Protein kinase domain occupies 192–485 (LQLLEVKARG…GERITQMQRL (294 aa)). ATP is bound by residues 198 to 206 (KARGRFGCV) and Lys-219. Catalysis depends on Asp-322, which acts as the Proton acceptor.

This sequence belongs to the protein kinase superfamily. TKL Ser/Thr protein kinase family. TGFB receptor subfamily. In terms of assembly, part of a complex consisting of MAGI2/ARIP1, ACVR2A, ACVR1B and SMAD3. Interacts with MAGI2/ARIP1. Interacts with type I receptor ACVR1. Interacts with BMP7. Interacts with TSC22D1/TSC-22. Interacts with activin A/INHBA. Mg(2+) serves as cofactor. Mn(2+) is required as a cofactor.

The protein resides in the cell membrane. The catalysed reaction is L-threonyl-[receptor-protein] + ATP = O-phospho-L-threonyl-[receptor-protein] + ADP + H(+). It carries out the reaction L-seryl-[receptor-protein] + ATP = O-phospho-L-seryl-[receptor-protein] + ADP + H(+). On ligand binding, forms a receptor complex consisting of two type II and two type I transmembrane serine/threonine kinases. Type II receptors phosphorylate and activate type I receptors which autophosphorylate, then bind and activate SMAD transcriptional regulators. Receptor for activin A, activin B and inhibin A. Mediates induction of adipogenesis by GDF6. The protein is Activin receptor type-2A (ACVR2A) of Bos taurus (Bovine).